Here is a 113-residue protein sequence, read N- to C-terminus: Large ribosomal subunit protein uL24 (113 aa).

Belongs to the universal ribosomal protein uL24 family. In terms of assembly, part of the 50S ribosomal subunit.

Its function is as follows. One of two assembly initiator proteins, it binds directly to the 5'-end of the 23S rRNA, where it nucleates assembly of the 50S subunit. Functionally, one of the proteins that surrounds the polypeptide exit tunnel on the outside of the subunit. This Synechococcus elongatus (strain ATCC 33912 / PCC 7942 / FACHB-805) (Anacystis nidulans R2) protein is Large ribosomal subunit protein uL24.